Reading from the N-terminus, the 149-residue chain is D-aminoacyl-tRNA deacylase (149 aa).

The Gly-cisPro motif, important for rejection of L-amino acids signature appears at 137–138 (GP).

It belongs to the DTD family. In terms of assembly, homodimer.

It localises to the cytoplasm. It carries out the reaction glycyl-tRNA(Ala) + H2O = tRNA(Ala) + glycine + H(+). It catalyses the reaction a D-aminoacyl-tRNA + H2O = a tRNA + a D-alpha-amino acid + H(+). Functionally, an aminoacyl-tRNA editing enzyme that deacylates mischarged D-aminoacyl-tRNAs. Also deacylates mischarged glycyl-tRNA(Ala), protecting cells against glycine mischarging by AlaRS. Acts via tRNA-based rather than protein-based catalysis; rejects L-amino acids rather than detecting D-amino acids in the active site. By recycling D-aminoacyl-tRNA to D-amino acids and free tRNA molecules, this enzyme counteracts the toxicity associated with the formation of D-aminoacyl-tRNA entities in vivo and helps enforce protein L-homochirality. This chain is D-aminoacyl-tRNA deacylase, found in Fervidobacterium nodosum (strain ATCC 35602 / DSM 5306 / Rt17-B1).